Consider the following 377-residue polypeptide: uncharacterized protein (377 aa).

Positions 1 to 23 are cleaved as a signal peptide; that stretch reads MLKFRNFFKLTLLTLASAFFLSG. The N-palmitoyl cysteine moiety is linked to residue C24. A lipid anchor (S-diacylglycerol cysteine) is attached at C24.

It localises to the cell membrane. This is an uncharacterized protein from Mycoplasma genitalium (strain ATCC 33530 / DSM 19775 / NCTC 10195 / G37) (Mycoplasmoides genitalium).